Here is a 381-residue protein sequence, read N- to C-terminus: Guanine nucleotide-binding protein G(s) subunit alpha (381 aa).

Cysteine 3 carries the S-palmitoyl cysteine lipid modification. In terms of domain architecture, G-alpha spans 36–381 (ALHRLLLLGA…RMHLQKYELL (346 aa)). The interval 39–52 (RLLLLGAGESGKST) is G1 motif. GTP-binding positions include 44–51 (GAGESGKS), 183–189 (LRCRVLT), 208–212 (GVGGQ), 277–280 (NKQD), and alanine 353. Mg(2+)-binding residues include serine 51 and threonine 189. A G2 motif region spans residues 181–189 (DILRCRVLT). The interval 204 to 213 (FYMFGVGGQR) is G3 motif. The segment at 273–280 (ILFLNKQD) is G4 motif. Positions 351 to 356 (TTAVDT) are G5 motif.

Belongs to the G-alpha family. G(s) subfamily. As to quaternary structure, g proteins are composed of 3 units; alpha, beta and gamma. The alpha chain contains the guanine nucleotide binding site.

Its function is as follows. Guanine nucleotide-binding proteins (G proteins) are involved as modulators or transducers in various transmembrane signaling systems. The G(s) protein is involved in hormonal regulation of adenylate cyclase: it activates the cyclase in response to beta-adrenergic stimuli. This Geodia cydonium (Sponge) protein is Guanine nucleotide-binding protein G(s) subunit alpha.